Here is a 360-residue protein sequence, read N- to C-terminus: Glucan endo-1,3-beta-glucosidase B (360 aa).

A signal peptide spans 1-25; sequence MATSQIAIIVLLGLLVATNIHITEA. Glutamine 26 is subject to Pyrrolidone carboxylic acid. The active-site Proton donor is the glutamate 120. Glutamate 265 (nucleophile) is an active-site residue. The propeptide at 341 to 360 is removed in mature form; sequence VSERVWDITNSTASSLTSEI. The N-linked (GlcNAc...) asparagine glycan is linked to asparagine 350.

The protein belongs to the glycosyl hydrolase 17 family.

It localises to the vacuole. It carries out the reaction Hydrolysis of (1-&gt;3)-beta-D-glucosidic linkages in (1-&gt;3)-beta-D-glucans.. Implicated in the defense of plants against pathogens. The chain is Glucan endo-1,3-beta-glucosidase B from Solanum lycopersicum (Tomato).